We begin with the raw amino-acid sequence, 258 residues long: uncharacterized protein (258 aa).

A helical transmembrane segment spans residues 163-187; it reads GIVGAAGLMLMFADLNGIPGICLMG.

The protein resides in the membrane. This is an uncharacterized protein from Methanocaldococcus jannaschii (strain ATCC 43067 / DSM 2661 / JAL-1 / JCM 10045 / NBRC 100440) (Methanococcus jannaschii).